Reading from the N-terminus, the 183-residue chain is Translocon-associated protein subunit beta (183 aa).

Positions 1–17 are cleaved as a signal peptide; sequence MRLLAFAVLALFAVTQA. The Lumenal segment spans residues 18–146; the sequence is EEGARLLASK…REFDRRFSPH (129 aa). N-linked (GlcNAc...) asparagine glycosylation occurs at Asn88. Residues 147-167 form a helical membrane-spanning segment; the sequence is FLDWAAFGVMTLPSIGVPLLL. Residues 168 to 183 lie on the Cytoplasmic side of the membrane; it reads WYSSKRKYDTPKTKKN.

Belongs to the TRAP-beta family. In terms of assembly, heterotetramer of TRAP-alpha, TRAP-beta, TRAP-delta and TRAP-gamma. Interacts with STING1.

The protein localises to the endoplasmic reticulum membrane. Functionally, TRAP proteins are part of a complex whose function is to bind calcium to the ER membrane and thereby regulate the retention of ER resident proteins. The chain is Translocon-associated protein subunit beta (SSR2) from Bos taurus (Bovine).